Consider the following 227-residue polypeptide: 2,3-bisphosphoglycerate-dependent phosphoglycerate mutase (227 aa).

Substrate-binding positions include 7 to 14 (RHGFSEWN), 20 to 21 (TG), arginine 59, 86 to 89 (ERHY), lysine 97, 113 to 114 (RR), and 182 to 183 (GN). Residue histidine 8 is the Tele-phosphohistidine intermediate of the active site. Glutamate 86 serves as the catalytic Proton donor/acceptor.

The protein belongs to the phosphoglycerate mutase family. BPG-dependent PGAM subfamily. As to quaternary structure, homodimer.

It carries out the reaction (2R)-2-phosphoglycerate = (2R)-3-phosphoglycerate. It participates in carbohydrate degradation; glycolysis; pyruvate from D-glyceraldehyde 3-phosphate: step 3/5. Functionally, catalyzes the interconversion of 2-phosphoglycerate and 3-phosphoglycerate. The sequence is that of 2,3-bisphosphoglycerate-dependent phosphoglycerate mutase from Glaesserella parasuis serovar 5 (strain SH0165) (Haemophilus parasuis).